Reading from the N-terminus, the 75-residue chain is MNKSKRSFRRRLPPIGSRDQIDHKNMSSISQFISERGKILSGRVSRLTPKQQRLMTIAIKRARIPSSSPFLNNDN.

The span at 1 to 12 (MNKSKRSFRRRL) shows a compositional bias: basic residues. The segment at 1–21 (MNKSKRSFRRRLPPIGSRDQI) is disordered.

It belongs to the bacterial ribosomal protein bS18 family. In terms of assembly, part of the 30S ribosomal subunit.

The protein resides in the plastid. It is found in the chloroplast. In Cycas taitungensis (Prince sago), this protein is Small ribosomal subunit protein bS18c.